We begin with the raw amino-acid sequence, 226 residues long: DnaJ homolog subfamily C member 30, mitochondrial (226 aa).

The transit peptide at 1–38 (MAAMRWRWWQRLLPWRLLQARGFPQNSAPSLGLGARTY) directs the protein to the mitochondrion. The J domain occupies 49–114 (ALYDLLGVPS…TLRRKYDRGL (66 aa)). A disordered region spans residues 116–157 (SDEDLRGPGVRPSRTPAPDPGSPRTPPPTSRTHDGSRASPGA). Positions 130–144 (TPAPDPGSPRTPPPT) are enriched in pro residues. Residues 208-225 (DTAAIFLIFSIFIIIGFY) traverse the membrane as a helical segment.

In terms of assembly, associates with the ATP synthase complex. Interacts with MT-ATP6; interaction is direct. Interacts with ATP5MC2; interaction is direct. Expressed in brain, heart, kidney, liver, lung, spleen, stomach and testis. Highly expressed in the brain. In the neocortex, expressed in most, if not all, glutamatergic excitatory projection neurons (pyramidal) and many interneurons, with the strongest signal noticeably in large pyramidal neurons of layer 3C. Also present in pyramidal neurons of layer 3C PNs of the superior temporal cortex, as well as in pyramidal neurons (Betz cells) of the layer 5B primary motor cortex (at protein level).

The protein localises to the mitochondrion inner membrane. In terms of biological role, mitochondrial protein enriched in neurons that acts as a regulator of mitochondrial respiration. Associates with the ATP synthase complex and facilitates ATP synthesis. May be a chaperone protein involved in the turnover of the subunits of mitochondrial complex I N-module. It facilitates the degradation of N-module subunits damaged by oxidative stress, and contributes to complex I functional efficiency. The protein is DnaJ homolog subfamily C member 30, mitochondrial of Homo sapiens (Human).